We begin with the raw amino-acid sequence, 314 residues long: tRNA pseudouridine synthase B (314 aa).

Asp47 acts as the Nucleophile in catalysis.

Belongs to the pseudouridine synthase TruB family. Type 1 subfamily.

The catalysed reaction is uridine(55) in tRNA = pseudouridine(55) in tRNA. In terms of biological role, responsible for synthesis of pseudouridine from uracil-55 in the psi GC loop of transfer RNAs. This chain is tRNA pseudouridine synthase B, found in Vibrio vulnificus (strain CMCP6).